The primary structure comprises 265 residues: Exosome complex component Rrp4 (265 aa).

In terms of domain architecture, S1 motif spans 65-137; sequence GDNVIGKIVD…EVNNIDLTTK (73 aa). A KH domain is found at 147–205; the sequence is KGGQIVKITPSRVPRVIGRGGSMINMIKKLTMTRIIVGQNGWIWVSGKNDALEKLAIEA. The interval 241 to 265 is disordered; that stretch reads EIPKLEEEPQGEDEVNGNDGEARGA.

It belongs to the RRP4 family. Component of the archaeal exosome complex. Forms a trimer of Rrp4 and/or Csl4 subunits. The trimer associates with a hexameric ring-like arrangement composed of 3 Rrp41-Rrp42 heterodimers.

It is found in the cytoplasm. In terms of biological role, non-catalytic component of the exosome, which is a complex involved in RNA degradation. Increases the RNA binding and the efficiency of RNA degradation. Confers strong poly(A) specificity to the exosome. The chain is Exosome complex component Rrp4 from Pyrococcus abyssi (strain GE5 / Orsay).